Consider the following 501-residue polypeptide: Ectoine/hydroxyectoine transporter (501 aa).

The next 12 membrane-spanning stretches (helical) occupy residues 9–29, 45–65, 86–106, 137–157, 190–210, 220–240, 258–278, 311–331, 343–363, 395–415, 441–461, and 465–485; these read PVFYVSAFVVFLLVIIGATLP, IHFGWFYLLAVFVFVVFLITL, FFTWIGMLFSAGFGAGLVFWG, AFFHWGVSQWSVFAIVGLVIA, LAVIATVMGVATSLGLGILQM, VPTSIWVQMAIAGVMLITYLI, LGSLFIIIVFVFMAGPTVFIL, WTIFYWAWSTAWSPFVGAFIA, VLGVLVVSPAIACIWIAAFGG, LPMTTILSILSIFLIFTFLVT, IVWGLLITAIAVVLLLAGGLE, and TASLISALPFTVILLLMMASF.

This sequence belongs to the BCCT transporter (TC 2.A.15) family.

The protein localises to the cell inner membrane. Its function is as follows. Mediates the import of ectoine and hydroxyectoine, which function as osmotic and cold stress protectants. Also has minor uptake activities for the compatible solutes proline and glycine betaine. The polypeptide is Ectoine/hydroxyectoine transporter (Virgibacillus pantothenticus).